The following is a 762-amino-acid chain: Transcription factor kpeA (762 aa).

The disordered stretch occupies residues 267 to 361 (FDHTSHGSQS…PLKPDQRKQA (95 aa)). Low complexity predominate over residues 294 to 312 (KKPSSPTRSTGSSSSTSPP). Positions 370-401 (CLRCKFLKKTCDKGEPCAGCQPSHARLWQVPC) form a DNA-binding region, zn(2)-C6 fungal-type.

Its subcellular location is the nucleus. Its function is as follows. Transcription factor that regulates conidiation as well as kojic acid production, likely by negatively controlling kojR and kojA expression. In Aspergillus oryzae (strain ATCC 42149 / RIB 40) (Yellow koji mold), this protein is Transcription factor kpeA.